Consider the following 267-residue polypeptide: Undecaprenyl-diphosphatase (267 aa).

A run of 7 helical transmembrane segments spans residues 1 to 21 (MPLL…FLPV), 40 to 60 (GQAI…LFFW), 85 to 105 (LALG…FLYF), 112 to 132 (LRSV…LYIA), 188 to 208 (IAML…GTEV), 219 to 239 (DMGI…ALMM), and 245 to 265 (VSFT…LFIA).

The protein belongs to the UppP family.

The protein resides in the cell inner membrane. The enzyme catalyses di-trans,octa-cis-undecaprenyl diphosphate + H2O = di-trans,octa-cis-undecaprenyl phosphate + phosphate + H(+). Its function is as follows. Catalyzes the dephosphorylation of undecaprenyl diphosphate (UPP). Confers resistance to bacitracin. The protein is Undecaprenyl-diphosphatase of Ruegeria sp. (strain TM1040) (Silicibacter sp.).